A 586-amino-acid chain; its full sequence is Regulatory protein NPR3 (586 aa).

Position 10 is a phosphoserine (Ser10). The BTB domain maps to 60 to 135 (SDAEIIVDGV…IYTGRLKPFP (76 aa)). Residues 138-152 (VSTCVDPVCSHDCCR) form a C2HC NPR-type zinc finger. The Zn(2+) site is built by Cys141, Cys146, His148, and Cys151. ANK repeat units lie at residues 261–291 (ERIG…TLDQ), 293–320 (NGLH…DVNY), and 324–353 (RGYT…NASE). The salicylic acid-binding core (SBC) stretch occupies residues 383–523 (ESSKARLCID…MAEYIDDDIL (141 aa)). Arg428 provides a ligand contact to salicylate. The disordered stretch occupies residues 554-586 (YSKDKESKIARSCLSASSSPSSSSIRDDLHNTT). Residues 565–577 (SCLSASSSPSSSS) are compositionally biased toward low complexity.

The protein belongs to the plant 'ANKYRIN-BTB/POZ' family. 'NPR1-like' subfamily. As to quaternary structure, forms homodimers and heterodimers with NPR4 in the presence of salicylic acid (SA). Interacts with TGA2, TGA3, TGA5 and TGA6. Interacts with CUL3A, a core component of the cullin-RING ubiquitin ligases (CRL). Interacts with TGA2 in vivo in the nucleus. Binds to NPR1; this interaction is promoted by association with SA, probably due to conformational changes.

It is found in the nucleus. It participates in protein modification; protein ubiquitination. In terms of biological role, salicylic acid (SA)-binding substrate-specific adapter of an E3 ubiquitin-protein ligase complex (CUL3-RBX1-BTB) which mediates the ubiquitination and subsequent proteasomal degradation of NPR1 in response to SA. Together with NPR4, acts as receptor of salicylic acid to monitor immunity in a NPR1-dependent manner and induce systemic acquired resistance (SAR). Involved in the regulation of basal defense responses against pathogens, and may be implicated in the cross-talk between the SA- and JA-dependent signaling pathways. The protein is Regulatory protein NPR3 of Arabidopsis thaliana (Mouse-ear cress).